Consider the following 301-residue polypeptide: Probable alpha-L-glutamate ligase (301 aa).

Positions 104-287 constitute an ATP-grasp domain; that stretch reads LQLLARKGVG…VAGMIINWTE (184 aa). ATP-binding positions include K141, 178–179, D187, and 211–213; these read EF and RSN. Positions 248, 260, and 262 each coordinate Mg(2+). Mn(2+) is bound by residues D248, E260, and N262.

It belongs to the RimK family. Requires Mg(2+) as cofactor. The cofactor is Mn(2+).

The protein is Probable alpha-L-glutamate ligase of Marinobacter nauticus (strain ATCC 700491 / DSM 11845 / VT8) (Marinobacter aquaeolei).